The chain runs to 225 residues: LysM and putative peptidoglycan-binding domain-containing protein 1 (225 aa).

Residues serine 23 and serine 33 each carry the phosphoserine modification. Residues 40 to 84 (LEHQLAPGDTLAGLALKYGVTMEQIKRANRLYTNDSIFLKKTLHI) enclose the LysM domain. The interval 97 to 153 (LDSEEEKDGEEAVQPSKDEVRPHSAERKKRERGLGHANGEPLPTAGQEPARHDLSAS) is disordered. The segment covering 98-107 (DSEEEKDGEE) has biased composition (acidic residues). Residue serine 99 is modified to Phosphoserine. Positions 112–121 (SKDEVRPHSA) are enriched in basic and acidic residues. 4 positions are modified to phosphoserine: serine 164, serine 179, serine 192, and serine 210. Residues 170 to 225 (AAQKLKKGESGIPGEDSSLHLSSPRMQQRAVLGPVPLTQTSRTRTLRDQEDEIFKL) are disordered. A compositionally biased stretch (basic and acidic residues) spans 214-225 (TLRDQEDEIFKL).

The polypeptide is LysM and putative peptidoglycan-binding domain-containing protein 1 (LYSMD1) (Bos taurus (Bovine)).